The following is a 311-amino-acid chain: Long form salivary protein D7L1 (311 aa).

An N-terminal signal peptide occupies residues 1 to 16; that stretch reads MKALIFLGAIIAGVLS. Cystine bridges form between Cys-34/Cys-67 and Cys-63/Cys-120. ADP-binding residues include Ser-146, Arg-149, Tyr-153, and Lys-160. Intrachain disulfides connect Cys-170-Cys-202, Cys-183-Cys-311, and Cys-244-Cys-258. The ADP site is built by Asn-281, Tyr-282, and Ser-283.

This sequence belongs to the PBP/GOBP family. As to expression, distal lateral and medial lobes of female mosquito salivary gland (at protein level). Expressed in the head and thorax of the female mosquitoes, where the salivary glands are located. Expressed in salivary gland. Not detected in the female mosquito abdomen. Not detected in the male mosquito tissues.

The protein resides in the secreted. In terms of biological role, modulates blood feeding of female mosquitoes on vertebrate species by binding and sequestering different mediators involved in the host response. Binds adenine, adenosine, AMP, ADP and ATP, with the highest affinity to ATP and ADP. Inhibits agonist-induced platelet aggregation and hemostasis. The polypeptide is Long form salivary protein D7L1 (Culex quinquefasciatus (Southern house mosquito)).